Consider the following 435-residue polypeptide: GPI-anchor transamidase component PIGU (435 aa).

At 1–3 the chain is on the cytoplasmic side; the sequence is MAA. A helical transmembrane segment spans residues 4 to 22; sequence PLALVLVVAVTVRAALFRS. At 23–78 the chain is on the lumenal side; it reads SLAEFISERVEVVSPLSSWKRVVEGLSLLDLGVSPYSGAVFHETPLIIYLFHFLID. Residues 79–99 traverse the membrane as a helical segment; it reads YAELVFMITDALTAIALYFAI. Over 100-136 the chain is Cytoplasmic; sequence QDFNKVVFKKQKLLLELDQYAPDVAELIRTPMEMRYI. A run of 4 helical transmembrane segments spans residues 137 to 158, 159 to 178, 179 to 194, and 195 to 205; these read PLKV…VAKS, TCAI…IKGS, VFLS…YQTL, and YPVTLFAPGLL. The Cytoplasmic portion of the chain corresponds to 206 to 222; sequence YLLQRQYIPVKVKSKAF. Lys-216 lines the a cardiolipin pocket. A helical membrane pass occupies residues 223–244; sequence WIFSWEYAMMYIGSLVVIVCLS. Over 245–286 the chain is Lumenal; sequence FFLLSSWDFIPAVYGFILSVPDLTPNIGLFWYFFAEMFEHFS. Residues 287–306 traverse the membrane as a helical segment; the sequence is LFFVCVFQINVFFYTVPLAI. The Cytoplasmic portion of the chain corresponds to 307–311; sequence KLKEH. Residue Lys-309 participates in a cardiolipin binding. A run of 2 helical transmembrane segments spans residues 312-331 and 332-345; these read PIFF…SYPT and VGDV…FPVW. Residues 346-354 lie on the Cytoplasmic side of the membrane; the sequence is NHLYRFLRN. The helical transmembrane segment at 355-372 threads the bilayer; that stretch reads VFVLTCIIVVCSLLFPVL. The Lumenal segment spans residues 373–384; sequence WHLWIYAGSANS. Residues Asn-383 and Asn-385 each coordinate a 2-acyl-6-[6-phosphoethanolamine-alpha-D-mannosyl-(1-&gt;2)-6-phosphoethanolamine-alpha-D-mannosyl-(1-&gt;6)-2-phosphoethanolamine-alpha-D-mannosyl-(1-&gt;4)-alpha-D-glucosaminyl]-1-(1-radyl,2-acyl-sn-glycero-3-phospho)-1D-myo-inositol. A helical membrane pass occupies residues 385 to 406; the sequence is NFFYAITLTFNVGQILLISDYF. Topologically, residues 407–435 are cytoplasmic; it reads YAFLRREYYLTHGLYLTAKDGTEAMLVLK.

This sequence belongs to the PIGU family. As to quaternary structure, heteropentamer. Part of the GPI-anchor transamidase complex, consisting of PIGK, PIGT, PIGS, PIGU and GAA1.

The protein localises to the endoplasmic reticulum membrane. The protein operates within glycolipid biosynthesis; glycosylphosphatidylinositol-anchor biosynthesis. Functionally, component of the glycosylphosphatidylinositol-anchor (GPI-anchor) transamidase (GPI-T) complex that catalyzes the formation of the linkage between a proprotein and a GPI-anchor and participates in GPI anchored protein biosynthesis. Binds the lipid portion of GPI-anchor. May act as an organizer in the transmembrane layer to recruit other subunits, and thus is essential for assembly of the complex. In Cricetulus griseus (Chinese hamster), this protein is GPI-anchor transamidase component PIGU.